Consider the following 423-residue polypeptide: Glutamyl-tRNA reductase (423 aa).

Residues 49 to 52, Ser-106, 111 to 113, and Gln-117 contribute to the substrate site; these read TCNR and EPQ. The active-site Nucleophile is the Cys-50. Position 186 to 191 (186 to 191) interacts with NADP(+); the sequence is GAGDTS.

Belongs to the glutamyl-tRNA reductase family. As to quaternary structure, homodimer.

It catalyses the reaction (S)-4-amino-5-oxopentanoate + tRNA(Glu) + NADP(+) = L-glutamyl-tRNA(Glu) + NADPH + H(+). It participates in porphyrin-containing compound metabolism; protoporphyrin-IX biosynthesis; 5-aminolevulinate from L-glutamyl-tRNA(Glu): step 1/2. Its function is as follows. Catalyzes the NADPH-dependent reduction of glutamyl-tRNA(Glu) to glutamate 1-semialdehyde (GSA). The sequence is that of Glutamyl-tRNA reductase from Idiomarina loihiensis (strain ATCC BAA-735 / DSM 15497 / L2-TR).